Reading from the N-terminus, the 115-residue chain is Chondroitin proteoglycan 8 (115 aa).

Residues 1–16 form the signal peptide; sequence MRPFILLALLVSVTVA. Residues 33 to 96 are disordered; that stretch reads VRRTTRDASD…GSGAAEVTSV (64 aa). O-linked (Xyl...) (chondroitin sulfate) serine glycans are attached at residues Ser-61, Ser-63, Ser-84, Ser-88, and Ser-109.

The sequence is that of Chondroitin proteoglycan 8 from Caenorhabditis elegans.